A 178-amino-acid polypeptide reads, in one-letter code: Nicotinamide-nucleotide adenylyltransferase (178 aa).

Belongs to the archaeal NMN adenylyltransferase family.

Its subcellular location is the cytoplasm. The catalysed reaction is beta-nicotinamide D-ribonucleotide + ATP + H(+) = diphosphate + NAD(+). Its pathway is cofactor biosynthesis; NAD(+) biosynthesis; NAD(+) from nicotinamide D-ribonucleotide: step 1/1. The sequence is that of Nicotinamide-nucleotide adenylyltransferase from Pyrobaculum arsenaticum (strain DSM 13514 / JCM 11321 / PZ6).